Here is a 394-residue protein sequence, read N- to C-terminus: Queuine tRNA-ribosyltransferase (394 aa).

The Proton acceptor role is filled by aspartate 99. Residues 99 to 103 (DSGGF), aspartate 153, glutamine 195, and glycine 222 contribute to the substrate site. Residues 253 to 259 (GVGHPED) are RNA binding. The active-site Nucleophile is aspartate 272. An RNA binding; important for wobble base 34 recognition region spans residues 277–281 (TRTGR). Zn(2+) is bound by residues cysteine 310, cysteine 312, cysteine 315, and histidine 341.

Belongs to the queuine tRNA-ribosyltransferase family. As to quaternary structure, homodimer. Within each dimer, one monomer is responsible for RNA recognition and catalysis, while the other monomer binds to the replacement base PreQ1. The cofactor is Zn(2+).

It carries out the reaction 7-aminomethyl-7-carbaguanine + guanosine(34) in tRNA = 7-aminomethyl-7-carbaguanosine(34) in tRNA + guanine. The protein operates within tRNA modification; tRNA-queuosine biosynthesis. Its function is as follows. Catalyzes the base-exchange of a guanine (G) residue with the queuine precursor 7-aminomethyl-7-deazaguanine (PreQ1) at position 34 (anticodon wobble position) in tRNAs with GU(N) anticodons (tRNA-Asp, -Asn, -His and -Tyr). Catalysis occurs through a double-displacement mechanism. The nucleophile active site attacks the C1' of nucleotide 34 to detach the guanine base from the RNA, forming a covalent enzyme-RNA intermediate. The proton acceptor active site deprotonates the incoming PreQ1, allowing a nucleophilic attack on the C1' of the ribose to form the product. After dissociation, two additional enzymatic reactions on the tRNA convert PreQ1 to queuine (Q), resulting in the hypermodified nucleoside queuosine (7-(((4,5-cis-dihydroxy-2-cyclopenten-1-yl)amino)methyl)-7-deazaguanosine). This chain is Queuine tRNA-ribosyltransferase, found in Deinococcus radiodurans (strain ATCC 13939 / DSM 20539 / JCM 16871 / CCUG 27074 / LMG 4051 / NBRC 15346 / NCIMB 9279 / VKM B-1422 / R1).